Here is a 278-residue protein sequence, read N- to C-terminus: Putative peptidase Cgl1093 (278 aa).

An N-terminal signal peptide occupies residues 1–32 (MSSASFTTKALSVLAALTAASAPLVAASPAHA). The region spanning 33–236 (LANARNVTGS…HAEWIAYYTG (204 aa)) is the Peptidase S1 domain. C59 and C75 are joined by a disulfide. Catalysis depends on charge relay system residues H74, D123, and S189.

Belongs to the peptidase S1 family.

It is found in the secreted. The chain is Putative peptidase Cgl1093 from Corynebacterium glutamicum (strain ATCC 13032 / DSM 20300 / JCM 1318 / BCRC 11384 / CCUG 27702 / LMG 3730 / NBRC 12168 / NCIMB 10025 / NRRL B-2784 / 534).